A 1660-amino-acid chain; its full sequence is Cortactin-binding protein 2 (1660 aa).

4 disordered regions span residues 1–26, 203–222, 366–440, and 454–478; these read MATDGASCEPDLSRAPEDAAGATAEA, KKKTNELEEELSAEKRRSTE, IGVS…LHPG, and GNANDPDQNGNTTQSPPSRDVSPTS. Residues 119-276 are a coiled coil; sequence RKMQERMSAQ…EQLKRGSDSK (158 aa). Residues 386 to 396 are compositionally biased toward low complexity; the sequence is PSTGSTPDPTS. Polar residues predominate over residues 411-422; sequence QTPGITPQNSQA. Position 498 is an asymmetric dimethylarginine (Arg-498). The disordered stretch occupies residues 499-596; sequence FTGPQAGAPP…PPSSLPQGNR (98 aa). Residues 583–593 are compositionally biased toward polar residues; sequence TVASPPSSLPQ. 5 ANK repeats span residues 709 to 739, 743 to 772, 776 to 805, 809 to 838, and 842 to 871; these read GRPTLLQQAAAQGNVTLLSMLLNEEGLDINY, DGHSALYSAAKNGHTDCVRLLLSAEAQVNA, NGFTPLCAAAAQGHFECVELLVAYDAHINH, GGQTPLYLACKNGNKECIKLLLEAGADRSV, and DGWTSVHAAVDTGNVDSLKLLMYHRVPAHG. The disordered stretch occupies residues 872–897; the sequence is NSFSEEESESGVFDLDGEEESPEGKS. Residues 875 to 892 show a composition bias toward acidic residues; that stretch reads SEEESESGVFDLDGEEES. One copy of the ANK 6 repeat lies at 912 to 942; that stretch reads EGWTAAHIAASKGFKNCLEILCRHGGLETER. Residues 1445–1477 form a disordered region; sequence CSKKKGESGSWRKVNTSPRRKSGRFSLPTWNKP. At Ser-1524 the chain carries Phosphoserine. The disordered stretch occupies residues 1617 to 1660; that stretch reads RSKVTQCSQNTKSSSSNTRQIEINNSKEENWNFHKNEHLEKPNK. Over residues 1619–1640 the composition is skewed to polar residues; it reads KVTQCSQNTKSSSSNTRQIEIN. Positions 1641 to 1660 are enriched in basic and acidic residues; sequence NSKEENWNFHKNEHLEKPNK.

Interacts with CTTN/cortactin SH3 domain. Interacts with STRN, STRN4/zinedin and MOB4/phocein; this interactions mediate the association with the STRIPAK core complex and may regulate dendritic spine distribution of the STRIPAK complex in hippocampal neurons. Activation of glutamate receptors weakens the interaction with STRN and STRN4.

The protein localises to the cytoplasm. The protein resides in the cell cortex. It localises to the cell projection. Its subcellular location is the dendritic spine. Its function is as follows. Regulates the dendritic spine distribution of CTTN/cortactin in hippocampal neurons, and thus controls dendritic spinogenesis and dendritic spine maintenance. Associates with the striatin-interacting phosphatase and kinase (STRIPAK) core complex to regulate dendritic spine distribution of the STRIPAK complex in hippocampal neurons. This Ateles geoffroyi (Black-handed spider monkey) protein is Cortactin-binding protein 2 (CTTNBP2).